We begin with the raw amino-acid sequence, 632 residues long: tRNA uridine 5-carboxymethylaminomethyl modification enzyme MnmG (632 aa).

FAD-binding positions include glycine 13–glycine 18, valine 125, and serine 180. An NAD(+)-binding site is contributed by glycine 273 to phenylalanine 287. Residue glutamine 370 participates in FAD binding.

This sequence belongs to the MnmG family. In terms of assembly, homodimer. Heterotetramer of two MnmE and two MnmG subunits. The cofactor is FAD.

It localises to the cytoplasm. NAD-binding protein involved in the addition of a carboxymethylaminomethyl (cmnm) group at the wobble position (U34) of certain tRNAs, forming tRNA-cmnm(5)s(2)U34. The chain is tRNA uridine 5-carboxymethylaminomethyl modification enzyme MnmG from Shewanella sediminis (strain HAW-EB3).